Reading from the N-terminus, the 473-residue chain is Serine/threonine-protein phosphatase T (473 aa).

TPR repeat units follow at residues 5 to 38, 40 to 72, and 73 to 106; these read ALEL…DSTN, ILYS…DPEY, and AKAY…APSD. The tract at residues 159–472 is catalytic; that stretch reads KQITKEFVED…MAYANGLLSG (314 aa). The Mn(2+) site is built by Asp-217, His-219, Asp-246, and Asn-278. The Proton donor/acceptor role is filled by His-279. Positions 327 and 404 each coordinate Mn(2+).

Belongs to the PPP phosphatase family. PP-5 (PP-T) subfamily. Requires Mg(2+) as cofactor. Mn(2+) is required as a cofactor.

The protein localises to the nucleus. The enzyme catalyses O-phospho-L-seryl-[protein] + H2O = L-seryl-[protein] + phosphate. It carries out the reaction O-phospho-L-threonyl-[protein] + H2O = L-threonyl-[protein] + phosphate. In terms of biological role, protein phosphatase that specifically binds to and dephosphorylates the molecular chaperone Hsp90. Dephosphorylation positively regulates the Hsp90 chaperone machinery. The sequence is that of Serine/threonine-protein phosphatase T (ppt1) from Schizosaccharomyces pombe (strain 972 / ATCC 24843) (Fission yeast).